We begin with the raw amino-acid sequence, 446 residues long: Aspartokinase (446 aa).

In terms of domain architecture, RPE1 insert spans 250–294 (IPLVKSTYMEESALNTKHSTKIDIPEDASGSTYKLPIELALQNRY).

The protein belongs to the aspartokinase family.

The catalysed reaction is L-aspartate + ATP = 4-phospho-L-aspartate + ADP. It functions in the pathway amino-acid biosynthesis; L-lysine biosynthesis via DAP pathway; (S)-tetrahydrodipicolinate from L-aspartate: step 1/4. The protein operates within amino-acid biosynthesis; L-methionine biosynthesis via de novo pathway; L-homoserine from L-aspartate: step 1/3. It participates in amino-acid biosynthesis; L-threonine biosynthesis; L-threonine from L-aspartate: step 1/5. The polypeptide is Aspartokinase (lysC) (Rickettsia prowazekii (strain Madrid E)).